The primary structure comprises 855 residues: Pre-mRNA-splicing factor SYF1 (855 aa).

HAT repeat units follow at residues 15–47 (LVFE…FKQG), 48–80 (APKP…ARRA), 90–122 (PAYE…FLMD), 124–158 (GRVT…FLRS), 160–192 (PLPE…SSDR), 198–230 (QRLA…LISQ), 235–268 (VQSL…YYIR), 270–305 (GHFE…FEES), and 369–407 (GRPR…FYED). The residue at position 420 (Lys-420) is an N6-acetyllysine. HAT repeat units lie at residues 498-530 (GTFQ…FLEE), 532-566 (KYFE…KFIS), 571-605 (RKLE…LEEE), 643-677 (YGVT…MECK), and 679-713 (GEID…FEVR). Residues 808–855 (AELAQQANPEEIQLGEDEDEDEMDLEPNEVRLEQQSVPAAVFGSLKED) form a disordered region. A compositionally biased stretch (acidic residues) spans 820 to 834 (QLGEDEDEDEMDLEP). Ser-851 is subject to Phosphoserine.

The protein belongs to the crooked-neck family. In terms of assembly, associates with RNA polymerase II, the TCR-specific proteins CKN1/CSA and ERCC6/CSB, and XPA. Identified in the spliceosome C complex. Component of the XAB2 complex, a multimeric protein complex composed of XAB2, PRPF19, AQR, ZNF830, ISY1, and PPIE. Identified in a pentameric intron-binding (IB) complex composed of AQR, XAB2, ISY1, ZNF830 and PPIE that is incorporated into the spliceosome as a preassembled complex. The IB complex does not contain PRPF19.

The protein localises to the nucleus. Functionally, involved in pre-mRNA splicing as component of the spliceosome. Involved in transcription-coupled repair (TCR), transcription and pre-mRNA splicing. This is Pre-mRNA-splicing factor SYF1 (Xab2) from Rattus norvegicus (Rat).